We begin with the raw amino-acid sequence, 464 residues long: 3-isopropylmalate dehydratase large subunit (464 aa).

3 residues coordinate [4Fe-4S] cluster: Cys345, Cys405, and Cys408.

It belongs to the aconitase/IPM isomerase family. LeuC type 1 subfamily. Heterodimer of LeuC and LeuD. [4Fe-4S] cluster is required as a cofactor.

The enzyme catalyses (2R,3S)-3-isopropylmalate = (2S)-2-isopropylmalate. The protein operates within amino-acid biosynthesis; L-leucine biosynthesis; L-leucine from 3-methyl-2-oxobutanoate: step 2/4. Catalyzes the isomerization between 2-isopropylmalate and 3-isopropylmalate, via the formation of 2-isopropylmaleate. This is 3-isopropylmalate dehydratase large subunit from Bacteroides fragilis (strain ATCC 25285 / DSM 2151 / CCUG 4856 / JCM 11019 / LMG 10263 / NCTC 9343 / Onslow / VPI 2553 / EN-2).